Consider the following 462-residue polypeptide: Cysteine--tRNA ligase (462 aa).

Cysteine 24 serves as a coordination point for Zn(2+). Positions 26 to 36 (PTVYDDAHLGH) match the 'HIGH' region motif. Zn(2+) is bound by residues cysteine 199, histidine 224, and glutamate 228. Positions 256-260 (KMSKS) match the 'KMSKS' region motif. Lysine 259 serves as a coordination point for ATP.

Belongs to the class-I aminoacyl-tRNA synthetase family. In terms of assembly, monomer. The cofactor is Zn(2+).

It is found in the cytoplasm. It catalyses the reaction tRNA(Cys) + L-cysteine + ATP = L-cysteinyl-tRNA(Cys) + AMP + diphosphate. The polypeptide is Cysteine--tRNA ligase (Campylobacter jejuni subsp. jejuni serotype O:23/36 (strain 81-176)).